The chain runs to 99 residues: MPKRKSPENTEGKDGTKLTKQEPTRRSARLSAKPVPPKPESKPRKTSAKKEPGTKISRGAKGKKEEKQEAGEEGTAPSANGDTKVEEAQRTESIEKEGE.

Composition is skewed to basic and acidic residues over residues 1–25 and 39–53; these read MPKR…EPTR and PESK…KEPG. The disordered stretch occupies residues 1 to 99; sequence MPKRKSPENT…RTESIEKEGE (99 aa). Serine 6 bears the Phosphoserine mark. Threonine 10 is subject to Phosphothreonine. A phosphoserine mark is found at serine 78 and serine 93. Basic and acidic residues predominate over residues 83-99; sequence TKVEEAQRTESIEKEGE.

Belongs to the HMGN family. Interacts with the ligand binding domain of the thyroid receptor (TR) (in vitro). Requires the presence of thyroid hormone for its interaction. Interacts with transcriptional regulator SEHBP. Interacts with nucleosomes. Expressed in the brain, eye, prostate, thyroid, kidney, testis, glial cells and insulin-producing cells of the Langerhans pancreatic islets. In the brain, expressed in the lateral olfactory tract, anterior commissure, corpus callosum, internal capsule, fornix, stria medullans, optic tract, axon bundles, Purkinje cell layer and granular layer of the cerebellum. In retina, expressed in the nuclei of cells in the inner nuclear layer including amacrine, bipolar and horizontal neurons and in the nuclei of ganglion neurons. Detected at low levels in the liver.

Its subcellular location is the nucleus. Its function is as follows. Binds to nucleosomes, regulating chromatin structure and consequently, chromatin-dependent processes such as transcription, DNA replication and DNA repair. Affects both insulin and glucagon levels and modulates the expression of pancreatic genes involved in insulin secretion. Regulates the expression of the glucose transporter SLC2A2 by binding specifically to its promoter region and recruiting PDX1 and additional transcription factors. Regulates the expression of SLC6A9, a glycine transporter which regulates the glycine concentration in synaptic junctions in the central nervous system, by binding to its transcription start site. May play a role in ocular development and astrocyte function. The polypeptide is High mobility group nucleosome-binding domain-containing protein 3 (Hmgn3) (Mus musculus (Mouse)).